The chain runs to 695 residues: MSEFQLVSSYQPTGDQPKAIAGLVKSILEGHRFQTLLGATGTGKTFTIAHTIQQVGRPTLVMAPNKTLAAQLCNELRELFPYNAVEYFISYYDYYQPEAYVPSTDTYIAKSSSINDEIDMLRHSATRSLFERRDVIVVASVSCIYGLGMPEEYLKASIPFQVGQEINQREVLRDLAGIQYERNDLELARGRFRVKGDVLEIVPAYEDRVIRIEFFGDEIEAIRLIDPVTGEILTSLSALRVYPARHFVTPEAQLQQAILNIEQELEEQLAFFRKQGKLLEAQRLEQRTRYDLEMLREVGYCNGIENYSRHLTGRKEGEPPACLVDYFKANDWLLVVDESHVTVPQIRGMYNGDRARKQVLVDHGFRLPSALDNRPLKAEEFWAKVHQCVFVSATPGNWELEQSGAQFETVVENGKTLKFYVPGTGRVIEQVIRPTGVVDPEVHVRPTAGQVEDLLGEIYLRLERSQQGLPERVIVTTLTKRMAEDLTEYLQERGIRVRYLHSEISSIERIEILQDFREGAFDVLVGVNLLREGLDLPEVSLVAILDADKEGFLRAERSLIQMIGRAARNVRGTVVMYADTLTGSMARAIAETQRRREIQLQYNRQHNITPKPIIKKNSNAILSFLAISRKLNSQDLEKAFPVADEIPLSEIPELIGQLELKMKAAAKNLEFEEAAQLRDQIKKLRQRLLGHHQST.

Residues 25–176 (KSILEGHRFQ…NQREVLRDLA (152 aa)) enclose the Helicase ATP-binding domain. Residue 38-45 (GATGTGKT) coordinates ATP. A Beta-hairpin motif is present at residues 91–114 (YYDYYQPEAYVPSTDTYIAKSSSI). One can recognise a Helicase C-terminal domain in the interval 454 to 617 (LLGEIYLRLE…ITPKPIIKKN (164 aa)). The region spanning 652 to 687 (PELIGQLELKMKAAAKNLEFEEAAQLRDQIKKLRQR) is the UVR domain.

The protein belongs to the UvrB family. In terms of assembly, forms a heterotetramer with UvrA during the search for lesions. Interacts with UvrC in an incision complex.

It localises to the cytoplasm. The UvrABC repair system catalyzes the recognition and processing of DNA lesions. A damage recognition complex composed of 2 UvrA and 2 UvrB subunits scans DNA for abnormalities. Upon binding of the UvrA(2)B(2) complex to a putative damaged site, the DNA wraps around one UvrB monomer. DNA wrap is dependent on ATP binding by UvrB and probably causes local melting of the DNA helix, facilitating insertion of UvrB beta-hairpin between the DNA strands. Then UvrB probes one DNA strand for the presence of a lesion. If a lesion is found the UvrA subunits dissociate and the UvrB-DNA preincision complex is formed. This complex is subsequently bound by UvrC and the second UvrB is released. If no lesion is found, the DNA wraps around the other UvrB subunit that will check the other stand for damage. In Synechococcus sp. (strain JA-3-3Ab) (Cyanobacteria bacterium Yellowstone A-Prime), this protein is UvrABC system protein B.